We begin with the raw amino-acid sequence, 762 residues long: MSSHITLIKTNTNNENKMTQFNYKVDNDVMIIRAMVNNVAKQMTPVWPLEKFIACNALHGFESMSFEEAVIQNQTAKKGTPFNEKLERVNWHMIKWCGSFLDIGQGTLEMPHRDKGLYFGFLKLAPFDSALHQNSKSIKSWLSNLPEMPEQAIRLCLDNLGVLNQKQEDFLQSTLSHLPGWAGYIKWISEWKNRNGKEENPVSLVDFIAVRLVITCILWPEASQEEKKKKKDSADTKQLIQNIKNKEDNYRQLLLKKLLPELSKAHIKENRANAQMVFCIDVRSEPFRRCIEKLGHYETLGFAGFFGLPVSIKDYDGETIKDSCPVLLKPRFNIHEKAIAANEHCIEHHEKGKEFKNILNRVYQQLKYNFSTPFALVESLGIWCGITMFLKSCSPIFARRLTKDLNEMICPSIQTQPVFELDLLEKEVGISLQEQIAYAEMALRLMGLTDNFAKLVIFCGHGSSTQNNPYASALDCGACGGNQGGKNAQLLASILNKIIVRRALAENGINIPQDTLFYGAQHDTTTDEVEIYHSNVSQFIHQDILAQLRTDLNMAKYNNNLERINYLNSIDCAEKDIARRSTDWSETRPEWGLARNAAFIVAPRQLTKNINLEGRCFLHSYDWSQDKDGTLLETILTAPMVVAQWINTQYLFSTIDNVAYGSGSKITHNVAGKIGVMQGNASDLMHGLPLQSVMSHDEQSFHEPQRLLTVVYAPREIISELVEKHDVLKTLFFNEWVHLVAIDPRNHLFYKLEKTNTWSVIQ.

4 residues coordinate Zn(2+): Cys279, Asp281, His461, and Cys476.

The protein belongs to the inorganic carbon transporter (TC 9.A.2) DabA family. As to quaternary structure, forms a complex with DabB. It depends on Zn(2+) as a cofactor.

The protein resides in the cell inner membrane. Functionally, part of an energy-coupled inorganic carbon pump. In Legionella pneumophila (strain Lens), this protein is Probable inorganic carbon transporter subunit DabA.